Here is a 521-residue protein sequence, read N- to C-terminus: Ribonuclease Y 1 (521 aa).

The helical transmembrane segment at 1-21 (MEIVISAIIGLLIGGTVVFVI) threads the bilayer. The tract at residues 51 to 87 (IKKESENKAKDFESRARKNVEQDIHKQKSTLKNKESQ) is disordered. Positions 211 to 271 (TVSVLALPND…VRRELARRTI (61 aa)) constitute a KH domain. Positions 337–430 (ALNQSLEVAT…VHAAYTLSSS (94 aa)) constitute an HD domain.

The protein belongs to the RNase Y family.

It localises to the cell membrane. Functionally, endoribonuclease that initiates mRNA decay. The chain is Ribonuclease Y 1 from Bdellovibrio bacteriovorus (strain ATCC 15356 / DSM 50701 / NCIMB 9529 / HD100).